Consider the following 169-residue polypeptide: Small ribosomal subunit protein uS5 (169 aa).

The region spanning 13–76 (LVEKLVSVRR…EKARRNMKDV (64 aa)) is the S5 DRBM domain.

The protein belongs to the universal ribosomal protein uS5 family. Part of the 30S ribosomal subunit. Contacts proteins S4 and S8.

Its function is as follows. With S4 and S12 plays an important role in translational accuracy. In terms of biological role, located at the back of the 30S subunit body where it stabilizes the conformation of the head with respect to the body. In Hydrogenovibrio crunogenus (strain DSM 25203 / XCL-2) (Thiomicrospira crunogena), this protein is Small ribosomal subunit protein uS5.